Reading from the N-terminus, the 339-residue chain is UDP-N-acetylenolpyruvoylglucosamine reductase (339 aa).

The region spanning 19–189 is the FAD-binding PCMH-type domain; the sequence is VDVRAQLFAE…LRVRFALNRV (171 aa). Arginine 166 is an active-site residue. Serine 239 serves as the catalytic Proton donor. Glutamate 335 is an active-site residue.

Belongs to the MurB family. It depends on FAD as a cofactor.

It is found in the cytoplasm. It catalyses the reaction UDP-N-acetyl-alpha-D-muramate + NADP(+) = UDP-N-acetyl-3-O-(1-carboxyvinyl)-alpha-D-glucosamine + NADPH + H(+). It functions in the pathway cell wall biogenesis; peptidoglycan biosynthesis. Functionally, cell wall formation. This is UDP-N-acetylenolpyruvoylglucosamine reductase from Pseudomonas fluorescens (strain Pf0-1).